A 582-amino-acid chain; its full sequence is NudC domain-containing protein 1 (582 aa).

Ser-7 is modified (phosphoserine). Residues 272–360 enclose the CS domain; sequence KVEPLYYWQQ…NEGLMWPELV (89 aa). Ser-387 carries the phosphoserine modification.

The protein resides in the cytoplasm. It localises to the nucleus. The polypeptide is NudC domain-containing protein 1 (Mus musculus (Mouse)).